The chain runs to 362 residues: Glucuronokinase 1 (362 aa).

Position 126–136 (126–136 (PRQTGLSGSSA)) interacts with ATP. The active-site Proton acceptor is aspartate 179.

It belongs to the GHMP kinase family. Requires Mg(2+) as cofactor. The cofactor is Mn(2+). Co(2+) is required as a cofactor. In terms of tissue distribution, highly expressed in pollen. Detected in seedlings, inflorescences, seeds, leaves and roots.

The enzyme catalyses D-glucuronate + ATP = 1-phospho-alpha-D-glucuronate + ADP + H(+). Functionally, sugar-1-kinase with a strict substrate specificity for D-glucuronic acid and ATP. Involved in the biosynthesis of UDP-glucuronic acid (UDP-GlcA), providing nucleotide sugars for cell-wall polymers. May be also involved in a salvage pathway for glucuronic acid. In Arabidopsis thaliana (Mouse-ear cress), this protein is Glucuronokinase 1 (GLCAK1).